The following is a 387-amino-acid chain: Patatin-01 (387 aa).

Positions 1–23 (MATTKSFLILSVMILATTSSTFA) are cleaved as a signal peptide. In terms of domain architecture, PNPLA spans 32–230 (LSIDGGGIKG…TVADPALLSV (199 aa)). A GXGXXG motif is present at residues 36-41 (GGGIKG). The GXSXG signature appears at 75–79 (GTSTG). Catalysis depends on S77, which acts as the Nucleophile. N115 carries an N-linked (GlcNAc...) asparagine glycan. D216 acts as the Proton acceptor in catalysis. Residues 216–218 (DGA) carry the DGA/G motif. Residues 361–385 (ETYEEALKRFAKLLSDRKKLRANKA) are a coiled coil.

The protein belongs to the patatin family. Tuber.

Its subcellular location is the vacuole. Its function is as follows. Probable lipolytic acyl hydrolase (LAH), an activity which is thought to be involved in the response of tubers to pathogens. The polypeptide is Patatin-01 (Solanum tuberosum (Potato)).